The following is a 102-amino-acid chain: Large ribosomal subunit protein bL21 (102 aa).

The protein belongs to the bacterial ribosomal protein bL21 family. In terms of assembly, part of the 50S ribosomal subunit. Contacts protein L20.

Functionally, this protein binds to 23S rRNA in the presence of protein L20. The sequence is that of Large ribosomal subunit protein bL21 from Leifsonia xyli subsp. xyli (strain CTCB07).